A 693-amino-acid polypeptide reads, in one-letter code: Pentatricopeptide repeat-containing protein At2g19280 (693 aa).

PPR repeat units lie at residues 200–234, 235–269, 270–304, 305–339, 340–370, 372–406, 407–441, 442–476, 477–511, 512–546, 547–581, 582–616, and 617–651; these read LETV…GIFP, SRGV…GRHL, NAAV…GIRP, DIVA…GISQ, DSVS…FRLR, NIFV…GLLP, DCVC…GNPP, SLTT…GLKL, DVVT…GISP, DVAT…GFVP, STLA…RMKP, DVVT…GLKP, and DVVL…GMLP.

The protein belongs to the PPR family. P subfamily.

The sequence is that of Pentatricopeptide repeat-containing protein At2g19280 from Arabidopsis thaliana (Mouse-ear cress).